Here is a 231-residue protein sequence, read N- to C-terminus: Adenosylcobinamide-GDP ribazoletransferase (231 aa).

The next 6 helical transmembrane spans lie at 29-49 (ICAY…SMKL), 53-73 (NFLW…LFHF), 101-121 (IGPF…YAFL), 126-146 (IDLI…LHFG), 167-187 (LISL…IISL), and 211-231 (DVLG…LSLI).

Belongs to the CobS family. Mg(2+) serves as cofactor.

The protein localises to the cell inner membrane. The catalysed reaction is alpha-ribazole + adenosylcob(III)inamide-GDP = adenosylcob(III)alamin + GMP + H(+). The enzyme catalyses alpha-ribazole 5'-phosphate + adenosylcob(III)inamide-GDP = adenosylcob(III)alamin 5'-phosphate + GMP + H(+). Its pathway is cofactor biosynthesis; adenosylcobalamin biosynthesis; adenosylcobalamin from cob(II)yrinate a,c-diamide: step 7/7. Joins adenosylcobinamide-GDP and alpha-ribazole to generate adenosylcobalamin (Ado-cobalamin). Also synthesizes adenosylcobalamin 5'-phosphate from adenosylcobinamide-GDP and alpha-ribazole 5'-phosphate. The polypeptide is Adenosylcobinamide-GDP ribazoletransferase (Kosmotoga olearia (strain ATCC BAA-1733 / DSM 21960 / TBF 19.5.1)).